Reading from the N-terminus, the 381-residue chain is MSTVFKKTSSNGKFSIYLGKRDFVDDVDTVEPIDGVVLVDPEYLEGRKLFVRLTCAFRYGRDDLDVIGLTFRKDLYVQTKQVAPAEPTSIQGPLTALQERLLHKLGVNAYPFTLQMVANLPCSVTLQPGPEDSGKPCGVDFEVKSFCAENLEEKIPKSDSVQLVVRKVQFSALEPGPGPSAQTIRSFFLSSQPLQLQAWMDREVHYHGEAISVHVSINNYTNKVIRRIKIAVVQTTDVVLYSLDKYTKTVFVQEFTETVAANSSFSQTFAVTPLLAANCQKQGLALDGKLKHEDTNLASSTILRPGMNKELLGILVSYKVRVNLVVSYGGILGGLPASDVGVELPVILIHPKPSPGERAVATSSEDIVIEEFMQHNSQTQS.

This sequence belongs to the arrestin family. Homodimer; disulfide-linked in response to retinal illumination. Interacts with CXCR4; the interaction is dependent on the C-terminal phosphorylation of CXCR4 and modulates the calcium ion mobilization activity of CXCR4. Interacts with GPR84. Inner and outer segments, and the inner plexiform regions of the retina.

Its subcellular location is the photoreceptor inner segment. It localises to the cell projection. The protein resides in the cilium. It is found in the photoreceptor outer segment. Its function is as follows. May play a role in an as yet undefined retina-specific signal transduction. Could bind to photoactivated-phosphorylated red/green opsins. This chain is Arrestin-C (Arr3), found in Mus musculus (Mouse).